Here is a 1280-residue protein sequence, read N- to C-terminus: Ankyrin repeat and sterile alpha motif domain-containing protein 1B (1280 aa).

ANK repeat units follow at residues glycine 2–glycine 31, serine 57–valine 86, lysine 90–arginine 119, glutamate 126–methionine 155, arginine 159–serine 188, arginine 192–threonine 221, and glutamate 224–isoleucine 253. Disordered regions lie at residues arginine 299–lysine 322, methionine 361–serine 399, serine 479–serine 573, asparagine 704–glycine 723, and serine 755–threonine 791. A compositionally biased stretch (basic and acidic residues) spans aspartate 482 to aspartate 491. Composition is skewed to polar residues over residues lysine 520 to glycine 550, alanine 707 to glycine 723, and serine 770 to serine 782. 2 SAM domains span residues cysteine 824 to valine 890 and asparagine 898 to glutamate 963. Disordered stretches follow at residues arginine 960–alanine 994 and glycine 1208–lysine 1243. Polar residues predominate over residues glycine 980–alanine 994. The region spanning isoleucine 1071 to proline 1223 is the PID domain.

Its subcellular location is the cytoplasm. The polypeptide is Ankyrin repeat and sterile alpha motif domain-containing protein 1B (anks1b) (Danio rerio (Zebrafish)).